Consider the following 101-residue polypeptide: Small ribosomal subunit protein uS14A (101 aa).

The tract at residues 28–57 is disordered; the sequence is KDIIRSPSSAPEQRSTAQRALARQPRDASP. The segment covering 33–45 has biased composition (polar residues); that stretch reads SPSSAPEQRSTAQ.

This sequence belongs to the universal ribosomal protein uS14 family. As to quaternary structure, part of the 30S ribosomal subunit. Contacts proteins S3 and S10.

Functionally, binds 16S rRNA, required for the assembly of 30S particles and may also be responsible for determining the conformation of the 16S rRNA at the A site. The protein is Small ribosomal subunit protein uS14A of Mycobacterium bovis (strain ATCC BAA-935 / AF2122/97).